The following is a 372-amino-acid chain: D-alanine--D-alanine ligase (372 aa).

Residues 145–349 (KTVLRAGGIP…CPNLLDQLIE (205 aa)) enclose the ATP-grasp domain. 176–231 (DRWGTSELFVKAVSLGSSVATLPVKTETEFTKAVKEVFRYDDRLMVEPRIRGREIE) provides a ligand contact to ATP. 3 residues coordinate Mg(2+): aspartate 303, glutamate 316, and asparagine 318.

This sequence belongs to the D-alanine--D-alanine ligase family. Mg(2+) is required as a cofactor. Requires Mn(2+) as cofactor.

It localises to the cytoplasm. The catalysed reaction is 2 D-alanine + ATP = D-alanyl-D-alanine + ADP + phosphate + H(+). It participates in cell wall biogenesis; peptidoglycan biosynthesis. Cell wall formation. This chain is D-alanine--D-alanine ligase, found in Coxiella burnetii (strain Dugway 5J108-111).